The primary structure comprises 1141 residues: Myosin-binding protein C, slow-type (1141 aa).

A compositionally biased stretch (basic and acidic residues) spans 1–10 (MPEPTKKEEN). The segment at 1-51 (MPEPTKKEENEVPAPAPPPEEPSKEKEAGTTPAKDWTLVETPPGEEQAKQN) is disordered. 5 Ig-like C2-type domains span residues 72–144 (GEDI…RCEV), 251–340 (SAAF…VREP), 341–431 (PIMV…VDLK), 432–520 (PLKI…HVID), and 522–619 (PKII…VVDF). Threonine 406 carries the post-translational modification Phosphothreonine. Serine 611 is subject to Phosphoserine. 2 Fibronectin type-III domains span residues 622-721 (PPVA…TSPP) and 722-833 (TLLT…VKEI). A Phosphothreonine modification is found at threonine 798. A Phosphotyrosine modification is found at tyrosine 823. The region spanning 837-931 (PKIRIPRHLK…ASIDIQIIDR (95 aa)) is the Ig-like C2-type 6 domain. One can recognise a Fibronectin type-III 3 domain in the interval 934–1029 (PPQIVKIEDV…TKESAVIARD (96 aa)). In terms of domain architecture, Ig-like C2-type 7 spans 1047 to 1141 (PMFTQPLVNT…CKLEVKVIAQ (95 aa)).

It belongs to the immunoglobulin superfamily. MyBP family. In terms of assembly, interacts with USP25 (isoform USP25m only); the interaction prevents proteasomal degradation of MYBPC1.

In terms of biological role, thick filament-associated protein located in the crossbridge region of vertebrate striated muscle a bands. Slow skeletal protein that binds to both myosin and actin. In vitro, binds to native thin filaments and modifies the activity of actin-activated myosin ATPase. May modulate muscle contraction or may play a more structural role. This chain is Myosin-binding protein C, slow-type (MYBPC1), found in Homo sapiens (Human).